A 100-amino-acid chain; its full sequence is MTAQHQSDTLLHRLNTLPPKRYGVFLLNDDYTTMEFVVEILTEIFMLGQEQAVAVMLLVHHEGKGLCGTYTRDIAQTKQQQVMQRAKAEGHPLQCIVEEI.

Belongs to the ClpS family. Binds to the N-terminal domain of the chaperone ClpA.

Its function is as follows. Involved in the modulation of the specificity of the ClpAP-mediated ATP-dependent protein degradation. In Neisseria meningitidis serogroup B (strain ATCC BAA-335 / MC58), this protein is ATP-dependent Clp protease adapter protein ClpS.